The sequence spans 133 residues: Fluoride-specific ion channel FluC (133 aa).

4 helical membrane passes run 3 to 23, 41 to 61, 76 to 96, and 103 to 123; these read AVVW…GSGL, WGTL…LIWV, IVGL…CLVF, and LIVG…VFLG. Na(+) is bound by residues Gly-81 and Thr-84.

It belongs to the fluoride channel Fluc/FEX (TC 1.A.43) family.

It localises to the cell inner membrane. The enzyme catalyses fluoride(in) = fluoride(out). Its activity is regulated as follows. Na(+) is not transported, but it plays an essential structural role and its presence is essential for fluoride channel function. Fluoride-specific ion channel. Important for reducing fluoride concentration in the cell, thus reducing its toxicity. The sequence is that of Fluoride-specific ion channel FluC from Xylella fastidiosa (strain M23).